The sequence spans 142 residues: uncharacterized protein (142 aa).

The 120-residue stretch at 1–120 (MADKFDANDE…TILKWEKNMD (120 aa)) folds into the N-acetyltransferase domain.

It belongs to the acetyltransferase family.

This is an uncharacterized protein from Streptococcus pyogenes serotype M3 (strain ATCC BAA-595 / MGAS315).